Reading from the N-terminus, the 194-residue chain is Imidazoleglycerol-phosphate dehydratase (194 aa).

It belongs to the imidazoleglycerol-phosphate dehydratase family.

The protein resides in the cytoplasm. The catalysed reaction is D-erythro-1-(imidazol-4-yl)glycerol 3-phosphate = 3-(imidazol-4-yl)-2-oxopropyl phosphate + H2O. Its pathway is amino-acid biosynthesis; L-histidine biosynthesis; L-histidine from 5-phospho-alpha-D-ribose 1-diphosphate: step 6/9. This chain is Imidazoleglycerol-phosphate dehydratase, found in Ruminiclostridium cellulolyticum (strain ATCC 35319 / DSM 5812 / JCM 6584 / H10) (Clostridium cellulolyticum).